Here is a 103-residue protein sequence, read N- to C-terminus: MYAVIQTGGKQYRVQPGDKVKVESLDAEAGQEVAFEKVLLIQSDDGVKIGQPFVSGGKVTGTVVAHGRHPKIRIIKFRRRKHHMKQAGHRQNYTEVQINEISA.

It belongs to the bacterial ribosomal protein bL21 family. As to quaternary structure, part of the 50S ribosomal subunit. Contacts protein L20.

Its function is as follows. This protein binds to 23S rRNA in the presence of protein L20. This chain is Large ribosomal subunit protein bL21, found in Methylococcus capsulatus (strain ATCC 33009 / NCIMB 11132 / Bath).